The chain runs to 293 residues: Eukaryotic translation initiation factor 3 subunit F (293 aa).

An N-acetylalanine modification is found at Ala-2. The MPN domain occupies 28–159 (ARIHPLVIFN…IKAFVSSNLS (132 aa)).

Belongs to the eIF-3 subunit F family. Component of the eukaryotic translation initiation factor 3 (eIF-3) complex. Binds to TIF3E1 and TIF3H1. In terms of tissue distribution, expressed in inflorescences, leaves, stems, siliques, roots and seedlings. Accumulates at highly levels in pollen grains, developing embryos and root tips.

It is found in the cytoplasm. Component of the eukaryotic translation initiation factor 3 (eIF-3) complex, which is involved in protein synthesis of a specialized repertoire of mRNAs and, together with other initiation factors, stimulates binding of mRNA and methionyl-tRNAi to the 40S ribosome. The eIF-3 complex specifically targets and initiates translation of a subset of mRNAs involved in cell proliferation (Potential). Involved in cell growth and differentiation, especially during embryogenesis and male gametophyte germination. Regulates sensitivity to sugars (e.g. sucrose). The chain is Eukaryotic translation initiation factor 3 subunit F (TIF3F1) from Arabidopsis thaliana (Mouse-ear cress).